Here is a 309-residue protein sequence, read N- to C-terminus: D-alanine--D-alanine ligase (309 aa).

In terms of domain architecture, ATP-grasp spans 110 to 305; sequence KLCWTGAGLP…FQELVWHILE (196 aa). 136–191 contacts ATP; it reads RQALGFPVIVKPAEEGSSIGMSRAATAEELAQAWERASGYGCAVFAERWIDGVEYT. Mg(2+) contacts are provided by Asp-259, Glu-272, and Asn-274.

It belongs to the D-alanine--D-alanine ligase family. The cofactor is Mg(2+). Requires Mn(2+) as cofactor.

Its subcellular location is the cytoplasm. It catalyses the reaction 2 D-alanine + ATP = D-alanyl-D-alanine + ADP + phosphate + H(+). Its pathway is cell wall biogenesis; peptidoglycan biosynthesis. Functionally, cell wall formation. The protein is D-alanine--D-alanine ligase of Methylococcus capsulatus (strain ATCC 33009 / NCIMB 11132 / Bath).